Here is a 1088-residue protein sequence, read N- to C-terminus: RNA-directed RNA polymerase (1088 aa).

Positions Leu501 to Ile687 constitute a RdRp catalytic domain.

The protein belongs to the reoviridae RNA-directed RNA polymerase family. In terms of assembly, interacts with VP3 (Potential). Interacts with VP2; this interaction activates VP1. Interacts with NSP5; this interaction is probably necessary for the formation of functional virus factories. Interacts with NSP2; this interaction is weak. It depends on Mg(2+) as a cofactor.

The protein localises to the virion. It carries out the reaction RNA(n) + a ribonucleoside 5'-triphosphate = RNA(n+1) + diphosphate. In terms of biological role, RNA-directed RNA polymerase that is involved in both transcription and genome replication. Together with VP3 capping enzyme, forms an enzyme complex positioned near the channels situated at each of the five-fold vertices of the core. Following infection, the outermost layer of the virus is lost, leaving a double-layered particle (DLP) made up of the core and VP6 shell. VP1 then catalyzes the transcription of fully conservative plus-strand genomic RNAs that are extruded through the DLP's channels into the cytoplasm where they function as mRNAs for translation of viral proteins. One copy of each of the viral (+)RNAs is also recruited during core assembly, together with newly synthesized polymerase complexes and VP2. The polymerase of these novo-formed particles catalyzes the synthesis of complementary minus-strands leading to dsRNA formation. To do so, the polymerase specifically recognizes and binds 4 bases 5'-UGUG-3' in the conserved 3'-sequence of plus-strand RNA templates. VP2 presumably activates the autoinhibited VP1-RNA complex to coordinate packaging and genome replication. Once dsRNA synthesis is complete, the polymerase switches to the transcriptional mode, thus providing secondary transcription. The sequence is that of RNA-directed RNA polymerase from Bos taurus (Bovine).